The sequence spans 108 residues: Inner membrane protein H108R (108 aa).

The chain crosses the membrane as a helical span at residues 10–32; that stretch reads LIVIITILITTRELSTTMLIVSL. Positions 49–64 are enriched in polar residues; that stretch reads ENNTFSMPQKNSFNES. The disordered stretch occupies residues 49–69; the sequence is ENNTFSMPQKNSFNESYNKDK. Asn-50 and Asn-62 each carry an N-linked (GlcNAc...) asparagine; by host glycan.

It belongs to the asfivirus H108R family.

The protein resides in the virion membrane. In African swine fever virus (strain Badajoz 1971 Vero-adapted) (Ba71V), this protein is Inner membrane protein H108R.